The sequence spans 158 residues: GTP-dependent dephospho-CoA kinase (158 aa).

GTP is bound by residues Asp35, Val36, Asp54, Lys56, Glu109, and Asp132.

The protein belongs to the GTP-dependent DPCK family.

It catalyses the reaction 3'-dephospho-CoA + GTP = GDP + CoA + H(+). Its pathway is cofactor biosynthesis; coenzyme A biosynthesis. Catalyzes the GTP-dependent phosphorylation of the 3'-hydroxyl group of dephosphocoenzyme A to form coenzyme A (CoA). This Methanococcus vannielii (strain ATCC 35089 / DSM 1224 / JCM 13029 / OCM 148 / SB) protein is GTP-dependent dephospho-CoA kinase.